A 748-amino-acid chain; its full sequence is ATP-dependent RNA helicase DRS1 (748 aa).

Disordered stretches follow at residues 1-72 (MAVK…PEFQ) and 111-211 (RKGG…EDTK). Residues 18-32 (DSEEDVPDLDASDDE) show a composition bias toward acidic residues. Residues 38-52 (VKSSKTKNKSKKKAK) show a composition bias toward basic residues. A compositionally biased stretch (basic and acidic residues) spans 58–67 (HLDEDVHEDL). 3 stretches are compositionally biased toward acidic residues: residues 124-153 (DAEE…DELA), 168-185 (ENEE…DEDD), and 202-211 (EDEDIEEDTK). Positions 233–261 (KTFNSLSLSRPVLKGLGSLGYTSPSPIQS) match the Q motif motif. Residues 264–439 (IPIALLGKDI…SLSLKKPVRI (176 aa)) enclose the Helicase ATP-binding domain. 277–284 (AVTGSGKT) is an ATP binding site. A DEAD box motif is present at residues 387–390 (DEAD). Residues 468–628 (LLYQLIRKLD…TQVEQVNSLI (161 aa)) enclose the Helicase C-terminal domain. Positions 632–667 (GDVVEEIIEEEKQEKEILRAEMELRKGENMLKHKEE) form a coiled coil. Residues 687–748 (KMLQVLAKNK…YGKKGKKGKK (62 aa)) are disordered. Basic residues predominate over residues 694–705 (KNKKPINSKKRK). The span at 720-732 (TQKDRVEYQERQY) shows a compositional bias: basic and acidic residues.

Belongs to the DEAD box helicase family. DDX27/DRS1 subfamily. As to quaternary structure, associates with pre-ribosomal particles.

Its subcellular location is the nucleus. It is found in the nucleolus. It catalyses the reaction ATP + H2O = ADP + phosphate + H(+). In terms of biological role, ATP-binding RNA helicase involved in ribosome assembly. This is ATP-dependent RNA helicase DRS1 (DRS1) from Kluyveromyces lactis (strain ATCC 8585 / CBS 2359 / DSM 70799 / NBRC 1267 / NRRL Y-1140 / WM37) (Yeast).